The primary structure comprises 161 residues: Small ribosomal subunit protein eS6 (161 aa).

A disordered region spans residues 119-161 (VLLGEEEPEDADDDGDSDVDADEATDTDAGSEEDNDDDIADAE). Acidic residues predominate over residues 122–161 (GEEEPEDADDDGDSDVDADEATDTDAGSEEDNDDDIADAE).

It belongs to the eukaryotic ribosomal protein eS6 family.

This is Small ribosomal subunit protein eS6 from Haloquadratum walsbyi (strain DSM 16790 / HBSQ001).